A 369-amino-acid polypeptide reads, in one-letter code: Anthranilate phosphoribosyltransferase (369 aa).

5-phospho-alpha-D-ribose 1-diphosphate-binding positions include Gly85, 88–89, Thr93, 95–98, 113–121, and Ser125; these read GD, NLST, and KHGNRAASS. Gly85 contacts anthranilate. Ser97 serves as a coordination point for Mg(2+). Asn116 provides a ligand contact to anthranilate. An anthranilate-binding site is contributed by Arg171. 2 residues coordinate Mg(2+): Asp229 and Glu230.

The protein belongs to the anthranilate phosphoribosyltransferase family. In terms of assembly, homodimer. It depends on Mg(2+) as a cofactor.

It catalyses the reaction N-(5-phospho-beta-D-ribosyl)anthranilate + diphosphate = 5-phospho-alpha-D-ribose 1-diphosphate + anthranilate. The protein operates within amino-acid biosynthesis; L-tryptophan biosynthesis; L-tryptophan from chorismate: step 2/5. Its function is as follows. Catalyzes the transfer of the phosphoribosyl group of 5-phosphorylribose-1-pyrophosphate (PRPP) to anthranilate to yield N-(5'-phosphoribosyl)-anthranilate (PRA). This chain is Anthranilate phosphoribosyltransferase, found in Frankia alni (strain DSM 45986 / CECT 9034 / ACN14a).